The sequence spans 442 residues: Ribosomal protein uS12 methylthiotransferase RimO (442 aa).

The 113-residue stretch at 5-117 (PSIGVVSLGC…VLDAIHAALP (113 aa)) folds into the MTTase N-terminal domain. [4Fe-4S] cluster is bound by residues Cys14, Cys50, Cys79, Cys148, Cys152, and Cys155. The region spanning 134 to 371 (LTPPHYAYLK…MAVQEAISRQ (238 aa)) is the Radical SAM core domain. Residues 374–441 (QRRVGQRQRV…AHDLYGMVVS (68 aa)) form the TRAM domain.

It belongs to the methylthiotransferase family. RimO subfamily. [4Fe-4S] cluster is required as a cofactor.

Its subcellular location is the cytoplasm. The enzyme catalyses L-aspartate(89)-[ribosomal protein uS12]-hydrogen + (sulfur carrier)-SH + AH2 + 2 S-adenosyl-L-methionine = 3-methylsulfanyl-L-aspartate(89)-[ribosomal protein uS12]-hydrogen + (sulfur carrier)-H + 5'-deoxyadenosine + L-methionine + A + S-adenosyl-L-homocysteine + 2 H(+). Its function is as follows. Catalyzes the methylthiolation of an aspartic acid residue of ribosomal protein uS12. This chain is Ribosomal protein uS12 methylthiotransferase RimO, found in Acidithiobacillus ferrooxidans (strain ATCC 53993 / BNL-5-31) (Leptospirillum ferrooxidans (ATCC 53993)).